The chain runs to 1342 residues: DNA-directed RNA polymerase subunit beta (1342 aa).

Belongs to the RNA polymerase beta chain family. As to quaternary structure, the RNAP catalytic core consists of 2 alpha, 1 beta, 1 beta' and 1 omega subunit. When a sigma factor is associated with the core the holoenzyme is formed, which can initiate transcription.

It carries out the reaction RNA(n) + a ribonucleoside 5'-triphosphate = RNA(n+1) + diphosphate. DNA-dependent RNA polymerase catalyzes the transcription of DNA into RNA using the four ribonucleoside triphosphates as substrates. This chain is DNA-directed RNA polymerase subunit beta, found in Histophilus somni (strain 129Pt) (Haemophilus somnus).